The chain runs to 95 residues: Aspartyl/glutamyl-tRNA(Asn/Gln) amidotransferase subunit C (95 aa).

Belongs to the GatC family. In terms of assembly, heterotrimer of A, B and C subunits.

It carries out the reaction L-glutamyl-tRNA(Gln) + L-glutamine + ATP + H2O = L-glutaminyl-tRNA(Gln) + L-glutamate + ADP + phosphate + H(+). It catalyses the reaction L-aspartyl-tRNA(Asn) + L-glutamine + ATP + H2O = L-asparaginyl-tRNA(Asn) + L-glutamate + ADP + phosphate + 2 H(+). Allows the formation of correctly charged Asn-tRNA(Asn) or Gln-tRNA(Gln) through the transamidation of misacylated Asp-tRNA(Asn) or Glu-tRNA(Gln) in organisms which lack either or both of asparaginyl-tRNA or glutaminyl-tRNA synthetases. The reaction takes place in the presence of glutamine and ATP through an activated phospho-Asp-tRNA(Asn) or phospho-Glu-tRNA(Gln). This chain is Aspartyl/glutamyl-tRNA(Asn/Gln) amidotransferase subunit C, found in Paracoccus denitrificans (strain Pd 1222).